A 395-amino-acid polypeptide reads, in one-letter code: Protein pelota (395 aa).

Positions 210–212 (PGF) match the PGF motif motif. The interval 371–395 (PELEDSDDDDDEDGAAGGVADSDSD) is disordered. Positions 372 to 384 (ELEDSDDDDDEDG) are enriched in acidic residues.

This sequence belongs to the eukaryotic release factor 1 family. Pelota subfamily. Component of the Pelota-HBS1L complex, also named Dom34-Hbs1 complex, composed of pelo and HBS1. Interacts with Pink1 and Cnot4; the interaction with Cnot4 appears to be Pink1-dependent. The cofactor is a divalent metal cation. As to expression, expressed in ovaries and muscles (at protein level). Expressed throughout all development stages.

It is found in the nucleus. The protein localises to the cytoplasm. Component of the Pelota-HBS1L complex, a complex that recognizes stalled ribosomes and triggers the No-Go Decay (NGD) pathway. In the Pelota-HBS1L complex, pelo recognizes ribosomes stalled at the 3' end of an mRNA and engages stalled ribosomes by destabilizing mRNA in the mRNA channel. Following ribosome-binding, the Pelota-HBS1L complex promotes recruitment of pix, which drives the disassembly of stalled ribosomes, followed by degradation of damaged mRNAs as part of the NGD pathway. Required prior to the first meiotic division for spindle formation and nuclear envelope breakdown during spermatogenesis. Together with HBS1, promotes spermatid individualization during spermatogenesis. Required for ovarian germ line stem cell self-renewal and oocyte development during oogenesis. Together with HSB1, required for transposon silencing in the ovary and testis. As part of the Pink1-regulated signaling, is recruited to damaged mitochondrial and is required for recruitment of autophagy receptors and induction of mitophagy. Required for normal eye patterning and for mitotic divisions in the ovary. The protein is Protein pelota (pelo) of Drosophila melanogaster (Fruit fly).